Here is a 258-residue protein sequence, read N- to C-terminus: MLSRRIIPCLDVRDGRVVKGVKFRDHIDMGDIVELAMRYRDQGADELVFYDIGASPEGRSVDYAWVERVARLIDIPFCVAGGIRDVETARAVLHAGADKISINSPALGRPQLISELADAFGVQCVVVGIDSIREEDGQWRVRRYTGDPSKTQALPMRTLDWVAEAQRLGAGEIVLNCMDNDGVRHGYDIAQLRQVRALCRVPLIASGGAGEMQHFADVFDQADADGALAASVFHSGAIPIPELKRFLRAQQIEVRDGQ.

Active-site residues include aspartate 11 and aspartate 130.

It belongs to the HisA/HisF family. As to quaternary structure, heterodimer of HisH and HisF.

The protein localises to the cytoplasm. It carries out the reaction 5-[(5-phospho-1-deoxy-D-ribulos-1-ylimino)methylamino]-1-(5-phospho-beta-D-ribosyl)imidazole-4-carboxamide + L-glutamine = D-erythro-1-(imidazol-4-yl)glycerol 3-phosphate + 5-amino-1-(5-phospho-beta-D-ribosyl)imidazole-4-carboxamide + L-glutamate + H(+). The protein operates within amino-acid biosynthesis; L-histidine biosynthesis; L-histidine from 5-phospho-alpha-D-ribose 1-diphosphate: step 5/9. In terms of biological role, IGPS catalyzes the conversion of PRFAR and glutamine to IGP, AICAR and glutamate. The HisF subunit catalyzes the cyclization activity that produces IGP and AICAR from PRFAR using the ammonia provided by the HisH subunit. The sequence is that of Imidazole glycerol phosphate synthase subunit HisF from Xanthomonas campestris pv. campestris (strain 8004).